The primary structure comprises 548 residues: Membrane protein insertase YidC (548 aa).

The chain crosses the membrane as a helical span at residues 6–26 (NLLVIALLFVSFMIWQAWEQD). Positions 28 to 58 (NPQPQQQQTTQTTTTAAGSAADQGVPASGQG) are disordered. Over residues 29–42 (PQPQQQQTTQTTTT) the composition is skewed to low complexity. A run of 4 helical transmembrane segments spans residues 350–370 (FLGN…GIMY), 420–440 (LGGC…YYML), 458–478 (LSAQ…MFFI), and 499–519 (PVIF…YYIV).

The protein belongs to the OXA1/ALB3/YidC family. Type 1 subfamily. Interacts with the Sec translocase complex via SecD. Specifically interacts with transmembrane segments of nascent integral membrane proteins during membrane integration.

The protein localises to the cell inner membrane. Its function is as follows. Required for the insertion and/or proper folding and/or complex formation of integral membrane proteins into the membrane. Involved in integration of membrane proteins that insert both dependently and independently of the Sec translocase complex, as well as at least some lipoproteins. Aids folding of multispanning membrane proteins. This Enterobacter sp. (strain 638) protein is Membrane protein insertase YidC.